We begin with the raw amino-acid sequence, 267 residues long: NAD kinase (267 aa).

Catalysis depends on Asp-45, which acts as the Proton acceptor. NAD(+) is bound by residues 45 to 46 (DG), 122 to 123 (NE), Arg-148, Asp-150, 161 to 166 (TAYNKS), Ala-185, and Gln-223.

It belongs to the NAD kinase family. It depends on a divalent metal cation as a cofactor.

Its subcellular location is the cytoplasm. The catalysed reaction is NAD(+) + ATP = ADP + NADP(+) + H(+). In terms of biological role, involved in the regulation of the intracellular balance of NAD and NADP, and is a key enzyme in the biosynthesis of NADP. Catalyzes specifically the phosphorylation on 2'-hydroxyl of the adenosine moiety of NAD to yield NADP. This is NAD kinase from Levilactobacillus brevis (strain ATCC 367 / BCRC 12310 / CIP 105137 / JCM 1170 / LMG 11437 / NCIMB 947 / NCTC 947) (Lactobacillus brevis).